The sequence spans 403 residues: Tryptophan synthase beta chain (403 aa).

Residue Lys-96 is modified to N6-(pyridoxal phosphate)lysine.

The protein belongs to the TrpB family. Tetramer of two alpha and two beta chains. The cofactor is pyridoxal 5'-phosphate.

The catalysed reaction is (1S,2R)-1-C-(indol-3-yl)glycerol 3-phosphate + L-serine = D-glyceraldehyde 3-phosphate + L-tryptophan + H2O. Its pathway is amino-acid biosynthesis; L-tryptophan biosynthesis; L-tryptophan from chorismate: step 5/5. Its function is as follows. The beta subunit is responsible for the synthesis of L-tryptophan from indole and L-serine. This chain is Tryptophan synthase beta chain, found in Ralstonia nicotianae (strain ATCC BAA-1114 / GMI1000) (Ralstonia solanacearum).